A 189-amino-acid chain; its full sequence is Probable nicotinate-nucleotide adenylyltransferase (189 aa).

Belongs to the NadD family.

It catalyses the reaction nicotinate beta-D-ribonucleotide + ATP + H(+) = deamido-NAD(+) + diphosphate. It functions in the pathway cofactor biosynthesis; NAD(+) biosynthesis; deamido-NAD(+) from nicotinate D-ribonucleotide: step 1/1. In terms of biological role, catalyzes the reversible adenylation of nicotinate mononucleotide (NaMN) to nicotinic acid adenine dinucleotide (NaAD). The polypeptide is Probable nicotinate-nucleotide adenylyltransferase (Staphylococcus aureus (strain USA300 / TCH1516)).